The primary structure comprises 70 residues: DNA-directed RNA polymerase subunit epsilon (70 aa).

It belongs to the RNA polymerase subunit epsilon family. In terms of assembly, RNAP is composed of a core of 2 alpha, a beta and a beta' subunit. The core is associated with a delta subunit, and at least one of epsilon or omega. When a sigma factor is associated with the core the holoenzyme is formed, which can initiate transcription.

The enzyme catalyses RNA(n) + a ribonucleoside 5'-triphosphate = RNA(n+1) + diphosphate. Functionally, a non-essential component of RNA polymerase (RNAP). This is DNA-directed RNA polymerase subunit epsilon from Bacillus cytotoxicus (strain DSM 22905 / CIP 110041 / 391-98 / NVH 391-98).